The following is a 250-amino-acid chain: Green-light absorbing proteorhodopsin (250 aa).

A signal peptide spans 1–18 (MGKLLLILGSVIALPTFA). Topologically, residues 19 to 29 (AGGGDLDASDY) are extracellular. Residues 30-53 (TGVSFWLVTAALLASTVFFFVERD) traverse the membrane as a helical segment. The Cytoplasmic portion of the chain corresponds to 54-58 (RVSAK). The helical transmembrane segment at 59–87 (WKTSLTVSGLVTGIAFWHYMYMRGVWIET) threads the bilayer. Topologically, residues 88–90 (GDS) are extracellular. Residues 91–118 (PTVFRYIDWLLTVPLLICEFYLILAAAT) form a helical membrane-spanning segment. Residues 119–121 (NVA) lie on the Cytoplasmic side of the membrane. Residues 122–144 (GSLFKKLLVGSLVMLVFGYMGEA) traverse the membrane as a helical segment. Over 145–147 (GIM) the chain is Extracellular. Residues 148-177 (AAWPAFIIGCLAWVYMIYELWAGEGKSACN) traverse the membrane as a helical segment. Residues 178–180 (TAS) are Cytoplasmic-facing. The chain crosses the membrane as a helical span at residues 181-208 (PAVQSAYNTMMYIIIFGWAIYPVGYFTG). Residues 209-218 (YLMGDGGSAL) lie on the Extracellular side of the membrane. The chain crosses the membrane as a helical span at residues 219 to 249 (NLNLIYNLADFVNKILFGLIIWNVAVKESSN). Residue Lys-232 is modified to N6-(retinylidene)lysine. A topological domain (cytoplasmic) is located at residue Ala-250.

Belongs to the archaeal/bacterial/fungal opsin family. In terms of assembly, homopentamer. GPR protomers assemble into a pentamer around a central pore with a C5 symmetry axis. In terms of processing, contains one covalently linked retinal chromophore per subunit.

The protein localises to the cell membrane. Light-driven proton pump. The polypeptide is Green-light absorbing proteorhodopsin (Unknown prokaryotic organism).